We begin with the raw amino-acid sequence, 335 residues long: MLLIGVAGTELTAQERDWLQHDAVAGVVLFKRNFASRQQVTDLSAAIRAAAPRPQLICVDQEGGRVQRFREGYSDLPPLQDIGALYATDPQQALALAERHAWLMASEVRASGLDLSFAPVVDLGRGNRAIGNRAFSEDPQVVAAFTAAYVRGMHSVGMAATLKHFPGHGTVLEDTHVDTAIDPRALDELRAQDLVPFQAGIAAGADAVMMAHVIYPQIAPEPAGYSPRWIQDILRGELGFRGVVFSDDIGMAASHSAGGVPARVHAHLDAGCDVVLVCHPELVDEALHAVQGRSLNTAALLGLIGRGALGWDGLLADARHGDTQTRLLETLGRTV.

Residues Asp60, Arg68, Arg133, and 163-164 (KH) contribute to the substrate site. The active-site Proton donor/acceptor is the His176. Catalysis depends on Asp247, which acts as the Nucleophile.

This sequence belongs to the glycosyl hydrolase 3 family. NagZ subfamily.

The protein localises to the cytoplasm. The enzyme catalyses Hydrolysis of terminal non-reducing N-acetyl-D-hexosamine residues in N-acetyl-beta-D-hexosaminides.. Its pathway is cell wall biogenesis; peptidoglycan recycling. Its function is as follows. Plays a role in peptidoglycan recycling by cleaving the terminal beta-1,4-linked N-acetylglucosamine (GlcNAc) from peptide-linked peptidoglycan fragments, giving rise to free GlcNAc, anhydro-N-acetylmuramic acid and anhydro-N-acetylmuramic acid-linked peptides. This Stenotrophomonas maltophilia (strain K279a) protein is Beta-hexosaminidase.